The sequence spans 97 residues: Large ribosomal subunit protein uL23 (97 aa).

It belongs to the universal ribosomal protein uL23 family. In terms of assembly, part of the 50S ribosomal subunit. Contacts protein L29, and trigger factor when it is bound to the ribosome.

Its function is as follows. One of the early assembly proteins it binds 23S rRNA. One of the proteins that surrounds the polypeptide exit tunnel on the outside of the ribosome. Forms the main docking site for trigger factor binding to the ribosome. In Mesorhizobium japonicum (strain LMG 29417 / CECT 9101 / MAFF 303099) (Mesorhizobium loti (strain MAFF 303099)), this protein is Large ribosomal subunit protein uL23.